A 255-amino-acid chain; its full sequence is F-box/SPRY domain-containing protein 1 (255 aa).

The F-box domain occupies 3–51 (DPVAALCNYNVLEVIFSYLELEDLSHCSQVCKSWYHFLNDENSDVWRWH). The B30.2/SPRY domain occupies 61-253 (LKSDLLSSVS…VSMVYLGTPL (193 aa)).

This sequence belongs to the FBXO45/Fsn family. In terms of assembly, component of an E3 ubiquitin ligase complex composed of hiw and Fsn.

It localises to the synapse. It participates in protein modification; protein ubiquitination. In terms of biological role, required in the presynaptic motoneuron to down-regulate the levels of wnd and restrain synaptic terminal growth at the neuromuscular junction (NMJ). The sequence is that of F-box/SPRY domain-containing protein 1 from Drosophila erecta (Fruit fly).